The chain runs to 253 residues: 1-(5-phosphoribosyl)-5-[(5-phosphoribosylamino)methylideneamino] imidazole-4-carboxamide isomerase (253 aa).

The Proton acceptor role is filled by Asp11. Asp132 functions as the Proton donor in the catalytic mechanism.

The protein belongs to the HisA/HisF family.

It is found in the cytoplasm. It catalyses the reaction 1-(5-phospho-beta-D-ribosyl)-5-[(5-phospho-beta-D-ribosylamino)methylideneamino]imidazole-4-carboxamide = 5-[(5-phospho-1-deoxy-D-ribulos-1-ylimino)methylamino]-1-(5-phospho-beta-D-ribosyl)imidazole-4-carboxamide. The protein operates within amino-acid biosynthesis; L-histidine biosynthesis; L-histidine from 5-phospho-alpha-D-ribose 1-diphosphate: step 4/9. This chain is 1-(5-phosphoribosyl)-5-[(5-phosphoribosylamino)methylideneamino] imidazole-4-carboxamide isomerase, found in Methylobacterium nodulans (strain LMG 21967 / CNCM I-2342 / ORS 2060).